The primary structure comprises 800 residues: Putative antiporter subunit mnhA2 (800 aa).

21 helical membrane passes run 1 to 21 (MSLVYLMATNLLFMLIVLFTL), 29 to 49 (VAGYVALIAPIVTSTYFIMKI), 78 to 98 (GLSLMFGLIISLIGVGVFFYA), 109 to 129 (LPRFFIYLLLFMFSMIGIVIA), 133 to 153 (ILMYVFWELTSISSFLLISYW), 167 to 187 (FMITVFGGLALLTGFIILYII), 209 to 229 (FIPMILMLLLGAFTKSAQFPF), 241 to 261 (TPVSAYLHSATMVKAGIFLLF), 272 to 292 (VYIYTVTFVGLITMLFGSLTA), 300 to 320 (GILAYSTISQLGMIMTMVGLG), 336 to 356 (ILVLFAGLFHLMNHAVFKCAL), 387 to 407 (IVMLLAALSMAGVPFLNGFLS), 424 to 444 (YGFVLTFVIISIGVIASILTF), 472 to 492 (PWLFSLPAVILMLLIPVIFFV), 528 to 548 (VNLPLILSIVVIIIGLILALV), 595 to 615 (IMITLFIFVAIVVYGYLTVGF), 627 to 647 (GPLEVILSVVTLIIGISLIFI), 651 to 671 (LTMVVLNGMIGFAVTLYFIAM), 676 to 696 (LALTQLVVETITTILFIVSFS), 712 to 732 (TFKIIVSLVMALTVVSLIFVA), and 768 to 788 (LDTMFEGLVLIIAGLGIYTLL).

Belongs to the CPA3 antiporters (TC 2.A.63) subunit A family. In terms of assembly, may form a heterooligomeric complex that consists of seven subunits: mnhA2, mnhB2, mnhC2, mnhD2, mnhE2, mnhF2 and mnhG2.

It is found in the cell membrane. The protein is Putative antiporter subunit mnhA2 (mnhA2) of Staphylococcus epidermidis (strain ATCC 12228 / FDA PCI 1200).